Reading from the N-terminus, the 373-residue chain is Glutamate 5-kinase (373 aa).

Lys-15 lines the ATP pocket. Substrate contacts are provided by Ser-55, Asp-142, and Asn-154. ATP is bound by residues 174–175 (TD) and 216–222 (TGGMATK). The region spanning 281–359 (AGSIVVDAGA…SEIERILGFR (79 aa)) is the PUA domain.

It belongs to the glutamate 5-kinase family.

Its subcellular location is the cytoplasm. The catalysed reaction is L-glutamate + ATP = L-glutamyl 5-phosphate + ADP. Its pathway is amino-acid biosynthesis; L-proline biosynthesis; L-glutamate 5-semialdehyde from L-glutamate: step 1/2. Its function is as follows. Catalyzes the transfer of a phosphate group to glutamate to form L-glutamate 5-phosphate. This is Glutamate 5-kinase from Geobacter sp. (strain M21).